Reading from the N-terminus, the 158-residue chain is Endoribonuclease YbeY (158 aa).

The Zn(2+) site is built by His117, His121, and His127.

The protein belongs to the endoribonuclease YbeY family. Zn(2+) serves as cofactor.

Its subcellular location is the cytoplasm. In terms of biological role, single strand-specific metallo-endoribonuclease involved in late-stage 70S ribosome quality control and in maturation of the 3' terminus of the 16S rRNA. This chain is Endoribonuclease YbeY, found in Francisella philomiragia subsp. philomiragia (strain ATCC 25017 / CCUG 19701 / FSC 153 / O#319-036).